A 509-amino-acid polypeptide reads, in one-letter code: Cobyric acid synthase (509 aa).

The 198-residue stretch at 262–459 (EIKVGIIKLP…IHGIFENDNW (198 aa)) folds into the GATase cobBQ-type domain. The active-site Nucleophile is Cys343. Residue His451 is part of the active site.

Belongs to the CobB/CobQ family. CobQ subfamily.

It functions in the pathway cofactor biosynthesis; adenosylcobalamin biosynthesis. In terms of biological role, catalyzes amidations at positions B, D, E, and G on adenosylcobyrinic A,C-diamide. NH(2) groups are provided by glutamine, and one molecule of ATP is hydrogenolyzed for each amidation. The sequence is that of Cobyric acid synthase from Prochlorococcus marinus (strain AS9601).